The chain runs to 262 residues: Protein BREAKING OF ASYMMETRY IN THE STOMATAL LINEAGE (262 aa).

Disordered stretches follow at residues aspartate 32–valine 107 and lysine 129–serine 222. The span at asparagine 37–asparagine 47 shows a compositional bias: low complexity. 2 short sequence motifs (nuclear localization signal) span residues phenylalanine 50–isoleucine 57 and lysine 61–lysine 68. Residues lysine 51–glutamate 66 show a composition bias toward basic residues. Serine 72, serine 85, serine 86, and serine 87 each carry phosphoserine; by ASK7. Residues arginine 84–serine 95 show a composition bias toward low complexity. Position 89 is a phosphoserine; by ASK7 and MPK6 (serine 89). Threonine 91 is subject to Phosphothreonine; by ASK7. The segment covering lysine 129–proline 146 has biased composition (basic and acidic residues). Serine 145 and serine 168 each carry phosphoserine; by MPK6. Polar residues predominate over residues asparagine 179 to aspartate 189. Over residues valine 190–glutamate 200 the composition is skewed to basic and acidic residues. A required for polarization at the cell cortex region spans residues serine 222–phenylalanine 262. The FxFP, required for cortical polarity formation signature appears at phenylalanine 223–proline 226. Residues serine 235 and serine 246 each carry the phosphoserine; by MPK6 modification.

Component of a complex made of POLAR, BASL, ASK7/BIN2 and ASK3/SK12. Interacts with POLAR, ASK7/BIN2 and ASK3/SK12. Binds to YDA when phosphorylated. Interacts with MPK6, MPK3 and MKK5. Cortical localization of BASL requires phosphorylation mediated by MPK3 and MPK6. Phosphorylation promotes YDA binding. Phosphorylation status modulates subcellular mobility. As to expression, mostly expressed in stomatal lineage cells including asymmetrically dividing meristemoid mother cells (MMCs) and meristemoids, and, at lower levels, in their sisters. Also present in vasculature. Expressed at low levels in the epidermal pavement cells.

It localises to the cytoplasm. Its subcellular location is the nucleus. The protein resides in the cell cortex. The protein localises to the cell membrane. Functionally, regulates asymmetric cell division (ACD), especially in stomatal-lineage cells, probably by modulating accumulation and subcellular polarization of POLAR and SPCH. Mediates an attenuation of MAPK signaling upon polarization of POLAR and ASK7/BIN2 in stomatal lineage ground cells (SLGCs) undergoing ACD, and relieves BIN2 inhibition of SPCH in the nucleus. When phosphorylated, functions as a scaffold and recruits the MAPKKK YODA, MPK3 and MPK6 to spatially reorganize the MAPK signaling pathway at the cortex of cells undergoing ACD. Cortical polarization leads to elevated nuclear MPK6 signaling and lowered SPCH abundance in one of the two daughter cells, thus differentiating the two daughter cells after ACD. This Arabidopsis thaliana (Mouse-ear cress) protein is Protein BREAKING OF ASYMMETRY IN THE STOMATAL LINEAGE.